Here is a 283-residue protein sequence, read N- to C-terminus: Pantothenate synthetase (283 aa).

30–37 (MGYFHEGH) lines the ATP pocket. His-37 functions as the Proton donor in the catalytic mechanism. Gln-61 provides a ligand contact to (R)-pantoate. Beta-alanine is bound at residue Gln-61. 147–150 (GEKD) serves as a coordination point for ATP. Gln-153 lines the (R)-pantoate pocket. ATP is bound by residues Val-176 and 184–187 (MSSR).

It belongs to the pantothenate synthetase family. In terms of assembly, homodimer.

It localises to the cytoplasm. The enzyme catalyses (R)-pantoate + beta-alanine + ATP = (R)-pantothenate + AMP + diphosphate + H(+). The protein operates within cofactor biosynthesis; (R)-pantothenate biosynthesis; (R)-pantothenate from (R)-pantoate and beta-alanine: step 1/1. Catalyzes the condensation of pantoate with beta-alanine in an ATP-dependent reaction via a pantoyl-adenylate intermediate. This chain is Pantothenate synthetase, found in Syntrophobacter fumaroxidans (strain DSM 10017 / MPOB).